The primary structure comprises 187 residues: Ribosome maturation factor RimM (187 aa).

Positions 94–168 constitute a PRC barrel domain; sequence DDEFYHADLV…RVIVDMPDGL (75 aa). The disordered stretch occupies residues 167 to 187; that stretch reads GLIGGDKPDTSDTAPLGQDFD.

Belongs to the RimM family. Binds ribosomal protein uS19.

It localises to the cytoplasm. In terms of biological role, an accessory protein needed during the final step in the assembly of 30S ribosomal subunit, possibly for assembly of the head region. Essential for efficient processing of 16S rRNA. May be needed both before and after RbfA during the maturation of 16S rRNA. It has affinity for free ribosomal 30S subunits but not for 70S ribosomes. The protein is Ribosome maturation factor RimM of Jannaschia sp. (strain CCS1).